The primary structure comprises 290 residues: Urease accessory protein UreD (290 aa).

This sequence belongs to the UreD family. UreD, UreF and UreG form a complex that acts as a GTP-hydrolysis-dependent molecular chaperone, activating the urease apoprotein by helping to assemble the nickel containing metallocenter of UreC. The UreE protein probably delivers the nickel.

Its subcellular location is the cytoplasm. Its function is as follows. Required for maturation of urease via the functional incorporation of the urease nickel metallocenter. The sequence is that of Urease accessory protein UreD from Paenarthrobacter aurescens (strain TC1).